The chain runs to 307 residues: Probable transposase for transposon Tn903 (307 aa).

Functionally, required for transposition of transposon Tn903. The polypeptide is Probable transposase for transposon Tn903 (Escherichia coli).